Consider the following 478-residue polypeptide: Melanopsin (478 aa).

The span at 1 to 14 (MNPPSGPRVPPSPT) shows a compositional bias: pro residues. The disordered stretch occupies residues 1–32 (MNPPSGPRVPPSPTQEPSCMATPAPPSWWDSS). The Extracellular portion of the chain corresponds to 1–72 (MNPPSGPRVP…VDVPDHAHYT (72 aa)). The helical transmembrane segment at 73-93 (LGTVILLVGLTGMLGNLTVIY) threads the bilayer. The Cytoplasmic segment spans residues 94–107 (TFCRSRSLRTPANM). The chain crosses the membrane as a helical span at residues 108–128 (FIINLAVSDFLMSFTQAPVFF). Topologically, residues 129–144 (TSSLYKQWLFGETGCE) are extracellular. Cysteine 143 and cysteine 221 are oxidised to a cystine. The chain crosses the membrane as a helical span at residues 145 to 165 (FYAFCGALFGISSMITLTAIA). Topologically, residues 166-188 (LDRYLVITRPLATFGVASKRRAA) are cytoplasmic. Residues 189-209 (FVLLGVWLYALAWSLPPFFGW) form a helical membrane-spanning segment. The Extracellular segment spans residues 210–238 (SAYVPEGLLTSCSWDYMSFTPAVRAYTML). Residues 239-259 (LCCFVFFLPLLIIIYCYIFIF) form a helical membrane-spanning segment. The Cytoplasmic portion of the chain corresponds to 260 to 296 (RAIRETGRALQTFGACKGNGESLWQRQRLQSECKMAK). Residues 297–317 (IMLLVILLFVLSWAPYSAVAL) form a helical membrane-spanning segment. The Extracellular segment spans residues 318–332 (VAFAGYAHVLTPYMS). Residues 333 to 353 (SVPAVIAKASAIHNPIIYAIT) traverse the membrane as a helical segment. Position 340 is an N6-(retinylidene)lysine (lysine 340). The Cytoplasmic segment spans residues 354–478 (HPKYRVAIAQ…GLIPSQDPRM (125 aa)). The disordered stretch occupies residues 440-478 (LYGQGLEDLEAKAPPRPQGHEAETPGKTKGLIPSQDPRM). Positions 448 to 465 (LEAKAPPRPQGHEAETPG) are enriched in basic and acidic residues.

Belongs to the G-protein coupled receptor 1 family. Opsin subfamily. Expressed in the retina.

The protein resides in the cell membrane. Its subcellular location is the cell projection. It is found in the axon. It localises to the dendrite. The protein localises to the perikaryon. In terms of biological role, photoreceptor that binds cis-retinaldehydes. Contributes to pupillar reflex, photoentrainment and other non-image forming responses to light. May be involved in the optokinetic visual tracking response. May be involved in the regulation of retinal hyaloid vessel growth and regression. In Homo sapiens (Human), this protein is Melanopsin (OPN4).